The primary structure comprises 257 residues: Chlorocatechol 1,2-dioxygenase (257 aa).

Positions 134, 169, 194, and 196 each coordinate Fe cation.

It belongs to the intradiol ring-cleavage dioxygenase family. The cofactor is Fe(3+).

It carries out the reaction 4-chlorocatechol + O2 = 3-chloro-cis,cis-muconate + 2 H(+). It catalyses the reaction 3,5-dichlorocatechol + O2 = (2E,4E)-2,4-dichloromuconate + 2 H(+). This chain is Chlorocatechol 1,2-dioxygenase (clcA), found in Rhodococcus opacus (Nocardia opaca).